The sequence spans 129 residues: Prefoldin subunit 4 (129 aa).

Met1 carries the post-translational modification N-acetylmethionine.

The protein belongs to the prefoldin subunit beta family. Heterohexamer of two PFD-alpha type and four PFD-beta type subunits.

In terms of biological role, binds specifically to cytosolic chaperonin (c-CPN) and transfers target proteins to it. Binds to nascent polypeptide chain and promotes folding in an environment in which there are many competing pathways for nonnative proteins. This is Prefoldin subunit 4 (GIM3) from Saccharomyces cerevisiae (strain ATCC 204508 / S288c) (Baker's yeast).